A 163-amino-acid chain; its full sequence is Nucleotide-binding protein Spro_1084 (163 aa).

It belongs to the YajQ family.

Nucleotide-binding protein. This chain is Nucleotide-binding protein Spro_1084, found in Serratia proteamaculans (strain 568).